The chain runs to 238 residues: MLPFRRILLRRGPLTGRAALFSPAFRTLGGVSREYASKPAKPAARNNTGPGFAMIFALAIIGTVIFNETAKNLDKNKPRNTFTEEEYEHVMQGLKRRVAMFPDGQLDVQFSLQKDSTQLKKLLGDSKLYIDPGQVVENYRSDREDPYEPLLNEVYSKYGPEYLKYLPQGLLVSLLGRYMKAHCRQGDHVVILDFPHSIKDAIKFENEVSSASKLLVPKESLDSDVCKYYQTVQKSQQL.

A mitochondrion-targeting transit peptide spans 1 to 35; sequence MLPFRRILLRRGPLTGRAALFSPAFRTLGGVSREY. A helical transmembrane segment spans residues 49-65; it reads GPGFAMIFALAIIGTVI.

Belongs to the AIM36 family.

It is found in the mitochondrion membrane. The sequence is that of Altered inheritance of mitochondria protein 36, mitochondrial (AIM36) from Zygosaccharomyces rouxii (strain ATCC 2623 / CBS 732 / NBRC 1130 / NCYC 568 / NRRL Y-229).